The primary structure comprises 666 residues: Long-chain-fatty-acid--CoA ligase ACSBG2 (666 aa).

ATP-binding positions include 230-238, 418-423, D496, and R624; these read TSGTTGIPK and ELYGLS.

It belongs to the ATP-dependent AMP-binding enzyme family. Bubblegum subfamily. In terms of tissue distribution, testis-specific.

It localises to the cytoplasm. The protein resides in the membrane. It carries out the reaction a long-chain fatty acid + ATP + CoA = a long-chain fatty acyl-CoA + AMP + diphosphate. It catalyses the reaction (5Z,8Z,11Z,14Z)-eicosatetraenoate + ATP + CoA = (5Z,8Z,11Z,14Z)-eicosatetraenoyl-CoA + AMP + diphosphate. The catalysed reaction is hexadecanoate + ATP + CoA = hexadecanoyl-CoA + AMP + diphosphate. The enzyme catalyses (9Z)-octadecenoate + ATP + CoA = (9Z)-octadecenoyl-CoA + AMP + diphosphate. It carries out the reaction (9Z,12Z)-octadecadienoate + ATP + CoA = (9Z,12Z)-octadecadienoyl-CoA + AMP + diphosphate. It catalyses the reaction tetracosanoate + ATP + CoA = tetracosanoyl-CoA + AMP + diphosphate. Functionally, catalyzes the conversion of fatty acids such as long chain and very long-chain fatty acids to their active form acyl-CoAs for both synthesis of cellular lipids, and degradation via beta-oxidation. Can activate diverse saturated, monosaturated and polyunsaturated fatty acids. Has increased ability to activate oleic and linoleic acid. May play a role in spermatogenesis. This chain is Long-chain-fatty-acid--CoA ligase ACSBG2, found in Homo sapiens (Human).